Consider the following 137-residue polypeptide: DNA-binding protein H-NS (137 aa).

The stretch at 13–65 (TLRAQARECTLETLEEMLEKLEVVVNERREEESAAAAEVEERTRKLQQYREML) forms a coiled coil. A DNA-binding region spans residues 112-117 (QGRTPA).

This sequence belongs to the histone-like protein H-NS family. In terms of assembly, homodimer that oligomerizes on DNA into higher-order complexes that form bridges between disparate regions of DNA compacting it. Interacts with Hha, YdgT and StpA.

The protein resides in the cytoplasm. It localises to the nucleoid. Functionally, a DNA-binding protein implicated in transcriptional repression and chromosome organization and compaction. Binds AT-rich DNA, repressing its transcription; about 754/4438 tested genes (15%) bind to H-NS, 70% of these are AT-rich and correspond to horizontally transferred geness (HTG), thus playing a central role in silencing foreign genes. This offers the selective advantage of silencing foreign DNA. Binds nucleation sites in AT-rich DNA and bridges them, forming higher-order nucleoprotein complexes and condensing the chromosome. A subset of genes are repressed by H-NS in association with Hha and/or YdgT. The polypeptide is DNA-binding protein H-NS (hns) (Salmonella typhimurium (strain 14028s / SGSC 2262)).